The primary structure comprises 129 residues: Flagellar assembly factor FliW 2 (129 aa).

This sequence belongs to the FliW family. Interacts with translational regulator CsrA and flagellin(s).

The protein resides in the cytoplasm. Functionally, acts as an anti-CsrA protein, binds CsrA and prevents it from repressing translation of its target genes, one of which is flagellin. Binds to flagellin and participates in the assembly of the flagellum. The polypeptide is Flagellar assembly factor FliW 2 (Helicobacter pylori (strain J99 / ATCC 700824) (Campylobacter pylori J99)).